A 144-amino-acid polypeptide reads, in one-letter code: 3-dehydroquinate dehydratase (144 aa).

The Proton acceptor role is filled by Y24. Substrate-binding residues include N73, H79, and D86. The active-site Proton donor is the H99. Substrate contacts are provided by residues 100–101 and R110; that span reads LS.

It belongs to the type-II 3-dehydroquinase family. As to quaternary structure, homododecamer.

It carries out the reaction 3-dehydroquinate = 3-dehydroshikimate + H2O. It participates in metabolic intermediate biosynthesis; chorismate biosynthesis; chorismate from D-erythrose 4-phosphate and phosphoenolpyruvate: step 3/7. Functionally, catalyzes a trans-dehydration via an enolate intermediate. This Shewanella sp. (strain MR-4) protein is 3-dehydroquinate dehydratase.